A 461-amino-acid chain; its full sequence is tRNA modification GTPase MnmE (461 aa).

The (6S)-5-formyl-5,6,7,8-tetrahydrofolate site is built by R27, E89, and R128. Positions 224–382 (GLATAIVGRP…LENAIEQLFF (159 aa)) constitute a TrmE-type G domain. N234 lines the K(+) pocket. GTP contacts are provided by residues 234-239 (NVGKSS), 253-259 (TDIAGTT), and 278-281 (DTAG). Position 238 (S238) interacts with Mg(2+). T253, I255, and T258 together coordinate K(+). T259 is a binding site for Mg(2+). K461 serves as a coordination point for (6S)-5-formyl-5,6,7,8-tetrahydrofolate.

It belongs to the TRAFAC class TrmE-Era-EngA-EngB-Septin-like GTPase superfamily. TrmE GTPase family. In terms of assembly, homodimer. Heterotetramer of two MnmE and two MnmG subunits. K(+) serves as cofactor.

It localises to the cytoplasm. Its function is as follows. Exhibits a very high intrinsic GTPase hydrolysis rate. Involved in the addition of a carboxymethylaminomethyl (cmnm) group at the wobble position (U34) of certain tRNAs, forming tRNA-cmnm(5)s(2)U34. This Lactobacillus johnsonii (strain CNCM I-12250 / La1 / NCC 533) protein is tRNA modification GTPase MnmE.